The chain runs to 107 residues: Monogrin 2 (107 aa).

Residues 1–20 form the signal peptide; that stretch reads MEGKVLLCFALLLPFTVAQA. Intrachain disulfides connect Cys-28-Cys-82, Cys-36-Cys-62, and Cys-55-Cys-78. The region spanning 29-82 is the BPTI/Kunitz inhibitor domain; the sequence is GYLMMQRCRGDTTETKAWGFNYEEKKCQKETVICGTGGAPRNAFETKKDCDALC. The Cell attachment site signature appears at 37–39; that stretch reads RGD.

Post-translationally, the N-terminus is blocked. In terms of tissue distribution, expressed in salivary glands.

The protein localises to the cytoplasmic vesicle. It localises to the secretory vesicle. It is found in the secreted. Tick salivary platelet aggregation inhibitor that plays an important part in the anti-hemostatic strategy of ticks. Inhibits platelet aggregation induced by ADP (IC(50)~150 nM), collagen, and platelet activating factor (PAF). Acts by binding to platelet membrane glycoprotein IIb-IIIa (ITGA2B/ITGB3) in a metal ion dependent manner. Does not inhibit aggregation induced by ristocecin, an agonist that aggregates platelets independently from the glycoprotein IIb-IIIa (ITGA2B/ITGB3). In contrast to other tick platelet aggregation inhibitors, this protein does not protect ITGA2B/ITGB3 from dissociation under SDS condition, suggesting it may dissocate much faster than its orthologs. The chain is Monogrin 2 from Argas monolakensis (Mono lake bird tick).